A 963-amino-acid chain; its full sequence is Kinesin-1 heavy chain (963 aa).

Ala2 carries the N-acetylalanine modification. The Kinesin motor domain occupies 8-325 (NIKVMCRFRP…LLFGQRAKTI (318 aa)). 85–92 (GQTSSGKT) is an ATP binding site. Lys213 is covalently cross-linked (Glycyl lysine isopeptide (Lys-Gly) (interchain with G-Cter in SUMO2)). Positions 329-914 (VCVNVELTAE…AVRSKNMARR (586 aa)) form a coiled coil. Residues 908 to 963 (SKNMARRGHSAQIAKPIRPGQHPAASPTHPSAIRGGGAFVQNSQPVAVRGGGGKQV) form a disordered region. The tract at residues 915–963 (GHSAQIAKPIRPGQHPAASPTHPSAIRGGGAFVQNSQPVAVRGGGGKQV) is globular. Position 933 is a phosphoserine (Ser933). Arg956 is subject to Omega-N-methylarginine.

The protein belongs to the TRAFAC class myosin-kinesin ATPase superfamily. Kinesin family. Kinesin subfamily. Oligomer composed of two heavy chains and two light chains. Interacts with GRIP1 and PPP1R42. Interacts with SYBU. Interacts with JAKMIP1. Interacts with PLEKHM2. Interacts with ECPAS. Interacts with ZFYVE27. Found in a complex with OGT, RHOT1, RHOT2 and TRAK1. Interacts with APP (via cytoplasmic domain).

Its subcellular location is the cytoplasm. It localises to the cytoskeleton. The protein localises to the cytolytic granule membrane. The protein resides in the lysosome membrane. In terms of biological role, microtubule-dependent motor required for normal distribution of mitochondria and lysosomes. Can induce formation of neurite-like membrane protrusions in non-neuronal cells in a ZFYVE27-dependent manner. Regulates centrosome and nuclear positioning during mitotic entry. During the G2 phase of the cell cycle in a BICD2-dependent manner, antagonizes dynein function and drives the separation of nuclei and centrosomes. Required for anterograde axonal transportation of MAPK8IP3/JIP3 which is essential for MAPK8IP3/JIP3 function in axon elongation. Through binding with PLEKHM2 and ARL8B, directs lysosome movement toward microtubule plus ends. Involved in NK cell-mediated cytotoxicity. Drives the polarization of cytolytic granules and microtubule-organizing centers (MTOCs) toward the immune synapse between effector NK lymphocytes and target cells. The protein is Kinesin-1 heavy chain of Homo sapiens (Human).